A 156-amino-acid chain; its full sequence is Single-stranded DNA-binding protein 1 (156 aa).

An SSB domain is found at 1-107; sequence MNETMICAVG…IDAVAIGHDL (107 aa). Low complexity predominate over residues 114–124; sequence FRRTARTEAST. Positions 114–156 are disordered; sequence FRRTARTEASTSPPRPEPNWEVPAGGTPGEPVPEQRPDPVPVG.

As to quaternary structure, homotetramer.

The protein is Single-stranded DNA-binding protein 1 (ssb1) of Streptomyces coelicolor (strain ATCC BAA-471 / A3(2) / M145).